The sequence spans 397 residues: Argininosuccinate synthase (397 aa).

8–16 (AYSGGLDTS) is an ATP binding site. Residue Tyr-87 coordinates L-citrulline. Gly-117 lines the ATP pocket. Residues Thr-119, Asn-123, and Asp-124 each contribute to the L-aspartate site. Asn-123 provides a ligand contact to L-citrulline. L-citrulline is bound by residues Arg-127, Ser-175, Glu-259, and Tyr-271.

Belongs to the argininosuccinate synthase family. Type 1 subfamily. As to quaternary structure, homotetramer.

The protein resides in the cytoplasm. It catalyses the reaction L-citrulline + L-aspartate + ATP = 2-(N(omega)-L-arginino)succinate + AMP + diphosphate + H(+). It functions in the pathway amino-acid biosynthesis; L-arginine biosynthesis; L-arginine from L-ornithine and carbamoyl phosphate: step 2/3. This Streptomyces clavuligerus protein is Argininosuccinate synthase.